The following is a 246-amino-acid chain: tRNA pseudouridine synthase A (246 aa).

The active-site Nucleophile is the D52. Y111 provides a ligand contact to substrate.

It belongs to the tRNA pseudouridine synthase TruA family. In terms of assembly, homodimer.

It catalyses the reaction uridine(38/39/40) in tRNA = pseudouridine(38/39/40) in tRNA. Formation of pseudouridine at positions 38, 39 and 40 in the anticodon stem and loop of transfer RNAs. The polypeptide is tRNA pseudouridine synthase A (Borreliella burgdorferi (strain ATCC 35210 / DSM 4680 / CIP 102532 / B31) (Borrelia burgdorferi)).